The sequence spans 66 residues: UPF0337 protein BA_0987/GBAA_0987/BAS0923 (66 aa).

Residues 1–22 form a disordered region; the sequence is MSESGLKEQITGKVEKTKGQVK. The segment covering 13-22 has biased composition (basic and acidic residues); sequence KVEKTKGQVK.

The protein belongs to the UPF0337 (CsbD) family.

In Bacillus anthracis, this protein is UPF0337 protein BA_0987/GBAA_0987/BAS0923.